The primary structure comprises 281 residues: Digeranylgeranylglyceryl phosphate synthase (281 aa).

The next 5 membrane-spanning stretches (helical) occupy residues 88–108 (IALSLFGIALSIFLGFIEFLI), 132–152 (ALVSLGVAFTLIFGSLAAGNL), 200–220 (GILVFLLSLATVVLTILPVIF), 225–245 (IIYLSLSVIISLPILMLASAI), and 261–281 (LIKVSMFLGLLGMLLDPFRVV).

It belongs to the UbiA prenyltransferase family. DGGGP synthase subfamily. Mg(2+) serves as cofactor.

It is found in the cell membrane. The catalysed reaction is sn-3-O-(geranylgeranyl)glycerol 1-phosphate + (2E,6E,10E)-geranylgeranyl diphosphate = 2,3-bis-O-(geranylgeranyl)-sn-glycerol 1-phosphate + diphosphate. The protein operates within membrane lipid metabolism; glycerophospholipid metabolism. In terms of biological role, prenyltransferase that catalyzes the transfer of the geranylgeranyl moiety of geranylgeranyl diphosphate (GGPP) to the C2 hydroxyl of (S)-3-O-geranylgeranylglyceryl phosphate (GGGP). This reaction is the second ether-bond-formation step in the biosynthesis of archaeal membrane lipids. The chain is Digeranylgeranylglyceryl phosphate synthase from Korarchaeum cryptofilum (strain OPF8).